Consider the following 54-residue polypeptide: ATP synthase F(0) complex subunit 8 (54 aa).

The helical transmembrane segment at 13 to 35 threads the bilayer; it reads ALSLWVCFPLMMLSLSSFLPLTL.

Belongs to the ATPase protein 8 family. As to quaternary structure, component of the ATP synthase complex composed at least of ATP5F1A/subunit alpha, ATP5F1B/subunit beta, ATP5MC1/subunit c (homooctomer), MT-ATP6/subunit a, MT-ATP8/subunit 8, ATP5ME/subunit e, ATP5MF/subunit f, ATP5MG/subunit g, ATP5MK/subunit k, ATP5MJ/subunit j, ATP5F1C/subunit gamma, ATP5F1D/subunit delta, ATP5F1E/subunit epsilon, ATP5PF/subunit F6, ATP5PB/subunit b, ATP5PD/subunit d, ATP5PO/subunit OSCP. ATP synthase complex consists of a soluble F(1) head domain (subunits alpha(3) and beta(3)) - the catalytic core - and a membrane F(0) domain - the membrane proton channel (subunits c, a, 8, e, f, g, k and j). These two domains are linked by a central stalk (subunits gamma, delta, and epsilon) rotating inside the F1 region and a stationary peripheral stalk (subunits F6, b, d, and OSCP).

Its subcellular location is the mitochondrion membrane. Subunit 8, of the mitochondrial membrane ATP synthase complex (F(1)F(0) ATP synthase or Complex V) that produces ATP from ADP in the presence of a proton gradient across the membrane which is generated by electron transport complexes of the respiratory chain. ATP synthase complex consist of a soluble F(1) head domain - the catalytic core - and a membrane F(1) domain - the membrane proton channel. These two domains are linked by a central stalk rotating inside the F(1) region and a stationary peripheral stalk. During catalysis, ATP synthesis in the catalytic domain of F(1) is coupled via a rotary mechanism of the central stalk subunits to proton translocation. In vivo, can only synthesize ATP although its ATP hydrolase activity can be activated artificially in vitro. Part of the complex F(0) domain. In Myxine glutinosa (Atlantic hagfish), this protein is ATP synthase F(0) complex subunit 8.